We begin with the raw amino-acid sequence, 275 residues long: MACPGFLWALVISTCLEFSMAQTVTQSQPEMSVQEAETVTLSCTYDTSESDYYLFWYKQPPSRQMILVIRQEAYKQQNATENRFSVNFQKAAKSFSLKISDSQLGDAAMYFCAYRSAVNARLMFGDGTQLVVKPNIQNPDPAVYQLRDSKSSDKSVCLFTDFDSQTNVSQSKDSDVYITDKTVLDMRSMDFKSNSAVAWSNKSDFACANAFNNSIIPEDTFFPSPESSCDVKLVEKSFETDTNLNFQNLSVIGFRILLLKVAGFNLLMTLRLWSS.

The signal sequence occupies residues Met1 to Ala21. Residues Gln22 to Ser116 form the Ig-like V-type domain. The t cell receptor alpha variable 38-2DV8 stretch occupies residues Gln22–Ser116. An intrachain disulfide couples Cys43 to Cys112. A CDR1 region spans residues Thr47–Tyr53. The tract at residues Gln71–Glu81 is CDR2. The N-linked (GlcNAc...) asparagine glycan is linked to Asn78. The CDR3 stretch occupies residues Cys112–Phe124. The t cell receptor alpha joining 31 stretch occupies residues Asn119–Pro134. Residues Ile136–Ser275 are t cell receptor alpha constant. An Ig-like C1-type domain is found at Lys154–Thr242. Cys157 and Cys207 are oxidised to a cystine. Asn167, Asn201, Asn212, and Asn248 each carry an N-linked (GlcNAc...) asparagine glycan. Residues Cys229–Ser250 form a connecting peptide region. The chain crosses the membrane as a helical span at residues Val251–Trp273. At Ser274–Ser275 the chain is on the cytoplasmic side.

Disulfide-linked heterodimer with TRBV25-1*01J2S3*01C2*01 beta chain. The alpha-beta TR associates with the transmembrane signaling CD3 coreceptor proteins to form the TR-CD3 (TCR). The assembly of alpha-beta TR heterodimers with CD3 occurs in the endoplasmic reticulum where a single alpha-beta TR heterodimer associates with one CD3D-CD3E heterodimer, one CD3G-CD3E heterodimer and one CD247 homodimer forming a stable octameric structure. CD3D-CD3E and CD3G-CD3E heterodimers preferentially associate with TR alpha and TR beta chains (via TM domain), respectively. The association of the CD247 homodimer is the last step of TCR assembly in the endoplasmic reticulum and is required for transport to the cell surface. Expressed in MR1-restricted CD8-positive T cells.

It is found in the cell membrane. In terms of biological role, the alpha chain of TRAV38-2DV8*01J31*01C*01/TRBV25-1*01J2S3*01C2*01 alpha-beta T cell receptor (TR) clonotype that displays pan-cancer cell recognition via the invariant MR1 molecule. On CD8-positive T cell clone MC.7.G5, likely recognizes tumor-specific or -associated metabolite(s) essential for cancer cell survival, triggering killing of many cancer cell types including lung, melanoma, leukemia, colon, breast, prostate, bone and ovarian cancer cells. Mediates cancer cell cytotoxicity in an HLA-independent manner. Has no reactivity to healthy cells, even stressed or infected by bacteria. Antigen recognition initiates TR-CD3 clustering on the cell surface and intracellular activation of LCK that phosphorylates the ITAM motifs of CD3G, CD3D, CD3E and CD247 enabling the recruitment of ZAP70. In turn, ZAP70 phosphorylates LAT, which recruits numerous signaling molecules to form the LAT signalosome. The LAT signalosome propagates signal branching to three major signaling pathways, the calcium, the mitogen-activated protein kinase (MAPK) kinase and the nuclear factor NF-kappa-B (NF-kB) pathways, leading to the mobilization of transcription factors that are critical for gene expression and essential for T cell differentiation into effector/memory T cells. This Homo sapiens (Human) protein is T cell receptor alpha chain MC.7.G5.